The sequence spans 126 residues: UPF0231 protein VC0395_A0134/VC395_0622 (126 aa).

Belongs to the UPF0231 family.

The sequence is that of UPF0231 protein VC0395_A0134/VC395_0622 from Vibrio cholerae serotype O1 (strain ATCC 39541 / Classical Ogawa 395 / O395).